The sequence spans 300 residues: Small ribosomal subunit protein uS2 (300 aa).

The interval 269 to 300 is disordered; that stretch reads WEADGADWAASSAAAPAESWAAEAQGAEGAKW.

This sequence belongs to the universal ribosomal protein uS2 family. Component of the small ribosomal subunit. Mature ribosomes consist of a small (40S) and a large (60S) subunit. The 40S subunit contains about 33 different proteins and 1 molecule of RNA (18S). The 60S subunit contains about 49 different proteins and 3 molecules of RNA (25S, 5.8S and 5S). Interacts with rps21.

The protein localises to the cytoplasm. Required for the assembly and/or stability of the 40S ribosomal subunit. Required for the processing of the 20S rRNA-precursor to mature 18S rRNA in a late step of the maturation of 40S ribosomal subunits. The polypeptide is Small ribosomal subunit protein uS2 (rps0) (Aspergillus terreus (strain NIH 2624 / FGSC A1156)).